The chain runs to 64 residues: Disintegrin (64 aa).

The Disintegrin domain maps to 1–64 (NSVHPCCDPV…SDCPRNRYNH (64 aa)). 4 cysteine pairs are disulfide-bonded: C6/C29, C20/C26, C25/C50, and C38/C57. The Cell attachment site; atypical (MLD) signature appears at 42-44 (MLD).

The protein belongs to the disintegrin family. Dimeric disintegrin subfamily. In terms of assembly, heterodimer; disulfide-linked. As to expression, expressed by the venom gland.

The protein resides in the secreted. In terms of biological role, inhibits adhesion of cells expressing alpha-4/beta-1 (ITGA4/ITGB1) and alpha-4/beta-7 (ITGA4/ITGB7) integrins to the natural ligands vascular cell adhesion molecule 1 (VCAM-1) and mucosal addressin cell adhesion molecule 1 (MADCAM-1). The sequence is that of Disintegrin from Echis carinatus (Saw-scaled viper).